The primary structure comprises 158 residues: 2-C-methyl-D-erythritol 2,4-cyclodiphosphate synthase (158 aa).

Residues D9 and H11 each contribute to the a divalent metal cation site. Residues 9 to 11 (DVH) and 35 to 36 (HS) each bind 4-CDP-2-C-methyl-D-erythritol 2-phosphate. H43 is a binding site for a divalent metal cation. 4-CDP-2-C-methyl-D-erythritol 2-phosphate-binding positions include 57–59 (DIG), 62–66 (FPDTD), 133–136 (TTTE), F140, and R143.

It belongs to the IspF family. Homotrimer. It depends on a divalent metal cation as a cofactor.

The catalysed reaction is 4-CDP-2-C-methyl-D-erythritol 2-phosphate = 2-C-methyl-D-erythritol 2,4-cyclic diphosphate + CMP. Its pathway is isoprenoid biosynthesis; isopentenyl diphosphate biosynthesis via DXP pathway; isopentenyl diphosphate from 1-deoxy-D-xylulose 5-phosphate: step 4/6. Involved in the biosynthesis of isopentenyl diphosphate (IPP) and dimethylallyl diphosphate (DMAPP), two major building blocks of isoprenoid compounds. Catalyzes the conversion of 4-diphosphocytidyl-2-C-methyl-D-erythritol 2-phosphate (CDP-ME2P) to 2-C-methyl-D-erythritol 2,4-cyclodiphosphate (ME-CPP) with a corresponding release of cytidine 5-monophosphate (CMP). The protein is 2-C-methyl-D-erythritol 2,4-cyclodiphosphate synthase of Geobacillus kaustophilus (strain HTA426).